The sequence spans 511 residues: 2-isopropylmalate synthase (511 aa).

The Pyruvate carboxyltransferase domain maps to 4 to 266; the sequence is IDIFDTTLRD…ETGIQLQEIK (263 aa). Mn(2+)-binding residues include Asp-13, His-201, His-203, and Asn-237. A regulatory domain region spans residues 392 to 511; that stretch reads ELKMVQVQYG…IKESLRAHPV (120 aa).

Belongs to the alpha-IPM synthase/homocitrate synthase family. LeuA type 1 subfamily. Homodimer. It depends on Mn(2+) as a cofactor.

The protein resides in the cytoplasm. The catalysed reaction is 3-methyl-2-oxobutanoate + acetyl-CoA + H2O = (2S)-2-isopropylmalate + CoA + H(+). It participates in amino-acid biosynthesis; L-leucine biosynthesis; L-leucine from 3-methyl-2-oxobutanoate: step 1/4. Functionally, catalyzes the condensation of the acetyl group of acetyl-CoA with 3-methyl-2-oxobutanoate (2-ketoisovalerate) to form 3-carboxy-3-hydroxy-4-methylpentanoate (2-isopropylmalate). The sequence is that of 2-isopropylmalate synthase from Lysinibacillus sphaericus (strain C3-41).